Reading from the N-terminus, the 289-residue chain is MTAKIGIIGGSGLYKMEALTDVEEVRLTTPFGDPSDAFICGKIGGVPVVFLARHGRHHHLLPTEIPFRANIYGFKSLGVEYLLSASAVGSLQEAVKPLDIVVPDQFIDRTRNRISTFFGDGIVAHIGFADPVCPALAGVLADAIADLNLPDVTLHRQGTYVCMEGPAFSTLAESNLYRSWGGTVIGMTNLPEAKLAREAEIAYATLALVTDYDCWHPEHDSVTVEMIMGNLQRNVKNAQAIICETVKRVHAHPPVSKAHRALKNAILTPLDQVPAATKEKLHLLLAKYL.

Residues serine 11, 53-54 (RH), and 86-87 (SA) each bind phosphate. Methionine 187 contacts substrate. Threonine 188 is a binding site for phosphate. 211–213 (DYD) contributes to the substrate binding site.

This sequence belongs to the PNP/MTAP phosphorylase family. MTAP subfamily. Homohexamer. Dimer of a homotrimer.

It carries out the reaction S-methyl-5'-thioadenosine + phosphate = 5-(methylsulfanyl)-alpha-D-ribose 1-phosphate + adenine. It participates in amino-acid biosynthesis; L-methionine biosynthesis via salvage pathway; S-methyl-5-thio-alpha-D-ribose 1-phosphate from S-methyl-5'-thioadenosine (phosphorylase route): step 1/1. In terms of biological role, catalyzes the reversible phosphorylation of S-methyl-5'-thioadenosine (MTA) to adenine and 5-methylthioribose-1-phosphate. Involved in the breakdown of MTA, a major by-product of polyamine biosynthesis. Responsible for the first step in the methionine salvage pathway after MTA has been generated from S-adenosylmethionine. Has broad substrate specificity with 6-aminopurine nucleosides as preferred substrates. In Thermosynechococcus vestitus (strain NIES-2133 / IAM M-273 / BP-1), this protein is S-methyl-5'-thioadenosine phosphorylase.